The primary structure comprises 241 residues: Venom nerve growth factor (241 aa).

The N-terminal stretch at 1–18 is a signal peptide; sequence MSMLCYTLIIAFLIGIWA. Positions 19–122 are excised as a propeptide; the sequence is APKSEDNVPL…SLNRNIRAKR (104 aa). 3 disulfide bridges follow: Cys136-Cys201, Cys179-Cys229, and Cys189-Cys231. N-linked (GlcNAc...) asparagine glycosylation is present at Asn145.

This sequence belongs to the NGF-beta family. Homodimer; non-covalently linked. As to expression, expressed by the venom gland.

It is found in the secreted. Nerve growth factor is important for the development and maintenance of the sympathetic and sensory nervous systems. It stimulates division and differentiation of sympathetic and embryonic sensory neurons as well as basal forebrain cholinergic neurons in the brain. Its relevance in the snake venom is not clear. However, it has been shown to inhibit metalloproteinase-dependent proteolysis of platelet glycoprotein Ib alpha, suggesting a metalloproteinase inhibition to prevent metalloprotease autodigestion and/or protection against prey proteases. Binds a lipid between the two protein chains in the homodimer. The lipid-bound form promotes histamine relase from mouse mast cells, contrary to the lipid-free form. This Crotalus durissus terrificus (South American rattlesnake) protein is Venom nerve growth factor.